Reading from the N-terminus, the 451-residue chain is Tubulin alpha chain (451 aa).

GTP is bound at residue Q11. The residue at position 40 (K40) is an N6-acetyllysine. Residues E71, G144, T145, T179, N206, and N228 each coordinate GTP. Residue E71 participates in Mg(2+) binding. E254 is a catalytic residue.

The protein belongs to the tubulin family. As to quaternary structure, dimer of alpha and beta chains. A typical microtubule is a hollow water-filled tube with an outer diameter of 25 nm and an inner diameter of 15 nM. Alpha-beta heterodimers associate head-to-tail to form protofilaments running lengthwise along the microtubule wall with the beta-tubulin subunit facing the microtubule plus end conferring a structural polarity. Microtubules usually have 13 protofilaments but different protofilament numbers can be found in some organisms and specialized cells. It depends on Mg(2+) as a cofactor. Undergoes a tyrosination/detyrosination cycle, the cyclic removal and re-addition of a C-terminal tyrosine residue by the enzymes tubulin tyrosine carboxypeptidase (TTCP) and tubulin tyrosine ligase (TTL), respectively. In terms of processing, acetylation of alpha chains at Lys-40 stabilizes microtubules and affects affinity and processivity of microtubule motors. This modification has a role in multiple cellular functions, ranging from cell motility, cell cycle progression or cell differentiation to intracellular trafficking and signaling.

It is found in the cytoplasm. The protein localises to the cytoskeleton. The catalysed reaction is GTP + H2O = GDP + phosphate + H(+). In terms of biological role, tubulin is the major constituent of microtubules, a cylinder consisting of laterally associated linear protofilaments composed of alpha- and beta-tubulin heterodimers. Microtubules grow by the addition of GTP-tubulin dimers to the microtubule end, where a stabilizing cap forms. Below the cap, tubulin dimers are in GDP-bound state, owing to GTPase activity of alpha-tubulin. The polypeptide is Tubulin alpha chain (TUBA) (Euglena gracilis).